Consider the following 35-residue polypeptide: Conotoxin Cal6.1d (35 aa).

Positions 1-8 are excised as a propeptide; it reads GLTRPSKR. 3 disulfides stabilise this stretch: C9–C25, C16–C29, and C24–C34.

This sequence belongs to the conotoxin O1 superfamily. In terms of tissue distribution, expressed by the venom duct.

The protein resides in the secreted. Its function is as follows. Probable neurotoxin with unknown target. Possibly targets ion channels. This is Conotoxin Cal6.1d from Californiconus californicus (California cone).